We begin with the raw amino-acid sequence, 91 residues long: Elongation factor 1-beta (91 aa).

It belongs to the EF-1-beta/EF-1-delta family.

Functionally, promotes the exchange of GDP for GTP in EF-1-alpha/GDP, thus allowing the regeneration of EF-1-alpha/GTP that could then be used to form the ternary complex EF-1-alpha/GTP/AAtRNA. This is Elongation factor 1-beta (ef1b) from Pyrococcus horikoshii (strain ATCC 700860 / DSM 12428 / JCM 9974 / NBRC 100139 / OT-3).